The primary structure comprises 250 residues: 3-deoxy-manno-octulosonate cytidylyltransferase (250 aa).

Belongs to the KdsB family.

It localises to the cytoplasm. The enzyme catalyses 3-deoxy-alpha-D-manno-oct-2-ulosonate + CTP = CMP-3-deoxy-beta-D-manno-octulosonate + diphosphate. The protein operates within nucleotide-sugar biosynthesis; CMP-3-deoxy-D-manno-octulosonate biosynthesis; CMP-3-deoxy-D-manno-octulosonate from 3-deoxy-D-manno-octulosonate and CTP: step 1/1. Its pathway is bacterial outer membrane biogenesis; lipopolysaccharide biosynthesis. Its function is as follows. Activates KDO (a required 8-carbon sugar) for incorporation into bacterial lipopolysaccharide in Gram-negative bacteria. In Actinobacillus pleuropneumoniae serotype 7 (strain AP76), this protein is 3-deoxy-manno-octulosonate cytidylyltransferase.